The primary structure comprises 399 residues: MKILVINCGSSSLKYQLLDMDTQTPIAKGLVERIGLPGAVLTHRPADGEKEIITAEIPNHTIAIQLVLDALVNPEYGVVKSLEEIGSVGHRVVHGGEKFASSVLITDEVMQAIEECIELAPLHNPPNIAGIEACQKLMPGVPQVAVFDTAFHQTMPPHAYLYGLPYEFYEKYKIRKYGFHGTSHKYVSQRAAKLLNRPAEGLKLISCHLGNGSSITAIKDGKSIETSMGFTPLEGLMMGTRSGDLDPAIVSFIQQKENLSSDEVNDFLNKKCGVLGLSGVSSDFRDIEQARDQGNYRAALALDVFSHDVKKYIGSYAAVLNGADAIIFTAGLGENSAEMREAVVDGLQYLGAKLDLEKNKVRGKEADISAPEATCRVLVIPTNEELMIALDTLDIIQKG.

N7 is a binding site for Mg(2+). ATP is bound at residue K14. R91 contacts substrate. D148 (proton donor/acceptor) is an active-site residue. ATP-binding positions include 208–212 (HLGNG), 283–285 (DFR), and 331–335 (GLGEN). E384 serves as a coordination point for Mg(2+).

Belongs to the acetokinase family. Homodimer. The cofactor is Mg(2+). Mn(2+) is required as a cofactor.

Its subcellular location is the cytoplasm. The catalysed reaction is acetate + ATP = acetyl phosphate + ADP. It functions in the pathway metabolic intermediate biosynthesis; acetyl-CoA biosynthesis; acetyl-CoA from acetate: step 1/2. Catalyzes the formation of acetyl phosphate from acetate and ATP. Can also catalyze the reverse reaction. The polypeptide is Acetate kinase (Desulfitobacterium hafniense (strain Y51)).